A 3661-amino-acid polypeptide reads, in one-letter code: Serine/threonine-protein kinase SMG1 (3661 aa).

Residues 1 to 11 (MSRRAPGSRLS) are compositionally biased toward low complexity. Disordered stretches follow at residues 1 to 101 (MSRR…TYGR) and 116 to 144 (PEFT…MSYS). Residues 1–1977 (MSRRAPGSRL…GVLLQQHMYV (1977 aa)) form an interaction with SMG8 and SMG9 region. The segment covering 26–35 (NDWQPRTDSA) has biased composition (polar residues). 2 stretches are compositionally biased toward basic and acidic residues: residues 69–86 (QRHD…DEKG) and 129–138 (ATKDMRKSQE). Lys173 carries the N6-acetyllysine modification. Residues 1154–1165 (RNSASPKHSLNG) show a composition bias toward polar residues. The disordered stretch occupies residues 1154-1175 (RNSASPKHSLNGESRKTVLSKP). One can recognise an FAT domain in the interval 1283–1866 (RELQKSIEVQ…LYPAIVGTIS (584 aa)). An HEAT repeat occupies 1817 to 1852 (APWRGIIPQLFSRLNHPEVYVRQSICNLLCRVAQDS). The interval 1898–1919 (ECEGGSPPASQDSNKDEPKSGL) is disordered. The region spanning 2124–2463 (VGGTITILPT…MEREITRSLF (340 aa)) is the PI3K/PI4K catalytic domain. Positions 2130-2136 (ILPTKTK) are G-loop. A catalytic loop region spans residues 2332-2340 (GLGDRHLDN). The interval 2352–2376 (HIDYNVCFEKGKSLRVPEKVPFRMT) is activation loop. Residue Thr3550 is modified to Phosphothreonine. Phosphoserine occurs at positions 3556 and 3570. Positions 3568 to 3579 (ATSADTPPSTVP) are enriched in polar residues. The tract at residues 3568 to 3591 (ATSADTPPSTVPGTGKSVACSPKK) is disordered. A phosphothreonine mark is found at Thr3573 and Thr3577. Residues 3629–3661 (RRMSVAEQVDYVIKEATNLDNLAQLYEGWTAWV) form the FATC domain.

The protein belongs to the PI3/PI4-kinase family. As to quaternary structure, component of the SMG1C complex composed of SMG1, SMG8 and SMG9; the recruitment of SMG8 to SMG1 N-terminus induces a large conformational change in the SMG1 C-terminal head domain containing the catalytic domain. Component of the transient SURF (SMG1-UPF1-eRF1-eRF3) complex. Part of a complex composed of SMG1, DHX34 and UPF1; within the complex DHX34 acts as a scaffolding protein to facilitate SMG1 phosphorylation of UPF1. Interacts with PRKCI. Interacts with TELO2 and TTI1. Interacts with RUVBL1 and RUVBL2. Interacts with UPF2. Interacts with DHX34 (via C-terminus); the interaction is RNA-independent. Mn(2+) is required as a cofactor. Post-translationally, autophosphorylated. Widely expressed, with highest level in heart and skeletal muscle. Expressed in placenta, brain, lung and spleen, but not in liver.

It localises to the nucleus. The protein localises to the cytoplasm. The enzyme catalyses L-seryl-[protein] + ATP = O-phospho-L-seryl-[protein] + ADP + H(+). It catalyses the reaction L-threonyl-[protein] + ATP = O-phospho-L-threonyl-[protein] + ADP + H(+). With respect to regulation, inhibited by caffeine, LY294002 and wortmannin. In terms of biological role, serine/threonine protein kinase involved in both mRNA surveillance and genotoxic stress response pathways. Recognizes the substrate consensus sequence [ST]-Q. Plays a central role in nonsense-mediated decay (NMD) of mRNAs containing premature stop codons by phosphorylating UPF1/RENT1. Recruited by release factors to stalled ribosomes together with SMG8 and SMG9 (forming the SMG1C protein kinase complex), and UPF1 to form the transient SURF (SMG1-UPF1-eRF1-eRF3) complex. In EJC-dependent NMD, the SURF complex associates with the exon junction complex (EJC) through UPF2 and allows the formation of an UPF1-UPF2-UPF3 surveillance complex which is believed to activate NMD. Also acts as a genotoxic stress-activated protein kinase that displays some functional overlap with ATM. Can phosphorylate p53/TP53 and is required for optimal p53/TP53 activation after cellular exposure to genotoxic stress. Its depletion leads to spontaneous DNA damage and increased sensitivity to ionizing radiation (IR). May activate PRKCI but not PRKCZ. The polypeptide is Serine/threonine-protein kinase SMG1 (Homo sapiens (Human)).